The chain runs to 265 residues: Type II pantothenate kinase (265 aa).

6 to 13 serves as a coordination point for ATP; sequence DAGGTLIK. The active-site Proton acceptor is the E70. Residues T99, 121–125, Y137, and S225 each bind ATP; that span reads GGMIQ.

This sequence belongs to the type II pantothenate kinase family. Homodimer.

The protein resides in the cytoplasm. The enzyme catalyses (R)-pantothenate + ATP = (R)-4'-phosphopantothenate + ADP + H(+). The protein operates within cofactor biosynthesis; coenzyme A biosynthesis; CoA from (R)-pantothenate: step 1/5. Functionally, catalyzes the phosphorylation of pantothenate (Pan), the first step in CoA biosynthesis. The sequence is that of Type II pantothenate kinase from Staphylococcus epidermidis (strain ATCC 12228 / FDA PCI 1200).